The following is a 118-amino-acid chain: Large ribosomal subunit protein bL17 (118 aa).

The protein belongs to the bacterial ribosomal protein bL17 family. Part of the 50S ribosomal subunit. Contacts protein L32.

The chain is Large ribosomal subunit protein bL17 from Campylobacter fetus subsp. fetus (strain 82-40).